The following is a 316-amino-acid chain: Beta-lactamase 3 (316 aa).

The first 29 residues, 1–29, serve as a signal peptide directing secretion; it reads MFVLNKFFTNSHYKKIVPVVLLSCATLIG. Residue Cys-30 is the site of N-palmitoyl cysteine attachment. Cys-30 carries the S-diacylglycerol cysteine lipid modification. The interval 34–53 is disordered; it reads NTQSESNKQTNQTNQVKQEN. Low complexity predominate over residues 40–50; it reads NKQTNQTNQVK. Residue Ser-95 is the Acyl-ester intermediate of the active site. Catalysis depends on Glu-191, which acts as the Proton acceptor. 257 to 259 contributes to the substrate binding site; sequence KTG.

The protein belongs to the class-A beta-lactamase family.

Its subcellular location is the cell membrane. It catalyses the reaction a beta-lactam + H2O = a substituted beta-amino acid. This is Beta-lactamase 3 (blaZ) from Bacillus cereus.